The sequence spans 365 residues: NADH-quinone oxidoreductase subunit H (365 aa).

8 helical membrane passes run Leu27–Ala47, Phe99–Val119, Ala133–Trp153, Ala168–Met188, Phe206–Val226, Ile268–Ile288, Ile294–Phe314, and Leu329–Met349.

This sequence belongs to the complex I subunit 1 family. NDH-1 is composed of 14 different subunits. Subunits NuoA, H, J, K, L, M, N constitute the membrane sector of the complex.

The protein resides in the cell inner membrane. It catalyses the reaction a quinone + NADH + 5 H(+)(in) = a quinol + NAD(+) + 4 H(+)(out). In terms of biological role, NDH-1 shuttles electrons from NADH, via FMN and iron-sulfur (Fe-S) centers, to quinones in the respiratory chain. The immediate electron acceptor for the enzyme in this species is believed to be ubiquinone. Couples the redox reaction to proton translocation (for every two electrons transferred, four hydrogen ions are translocated across the cytoplasmic membrane), and thus conserves the redox energy in a proton gradient. This subunit may bind ubiquinone. The polypeptide is NADH-quinone oxidoreductase subunit H (Nitrosomonas eutropha (strain DSM 101675 / C91 / Nm57)).